We begin with the raw amino-acid sequence, 149 residues long: Nucleoside diphosphate kinase (149 aa).

Residues lysine 9, phenylalanine 57, arginine 85, threonine 91, arginine 102, and asparagine 112 each coordinate ATP. The active-site Pros-phosphohistidine intermediate is histidine 115.

Belongs to the NDK family. In terms of assembly, homotetramer. Mg(2+) serves as cofactor.

It localises to the cytoplasm. The enzyme catalyses a 2'-deoxyribonucleoside 5'-diphosphate + ATP = a 2'-deoxyribonucleoside 5'-triphosphate + ADP. The catalysed reaction is a ribonucleoside 5'-diphosphate + ATP = a ribonucleoside 5'-triphosphate + ADP. In terms of biological role, major role in the synthesis of nucleoside triphosphates other than ATP. The ATP gamma phosphate is transferred to the NDP beta phosphate via a ping-pong mechanism, using a phosphorylated active-site intermediate. The chain is Nucleoside diphosphate kinase from Staphylococcus aureus (strain Mu3 / ATCC 700698).